Consider the following 114-residue polypeptide: Protein vCCL3 (114 aa).

An N-terminal signal peptide occupies residues 1 to 26 (MWSMCWVLRAHLGLLFWVAVIELCAA).

Functionally, acts as a highly selective agonist for human lymphoactin receptor XCR1. This chain is Protein vCCL3 (K4.1), found in Human herpesvirus 8 type P (isolate GK18) (HHV-8).